We begin with the raw amino-acid sequence, 922 residues long: Metabotropic glutamate receptor 7 (922 aa).

The N-terminal stretch at 1-34 is a signal peptide; that stretch reads MVQLRKLLRVLTLMKFPCCVLEVLLCALAAAARG. Over 35 to 590 the chain is Extracellular; that stretch reads QEMYAPHSIR…IIKLEWHSPW (556 aa). A disulfide bridge connects residues cysteine 67 and cysteine 109. N-linked (GlcNAc...) asparagine glycosylation is present at asparagine 98. L-glutamate-binding positions include serine 159, 180–182, tyrosine 230, and aspartate 314; that span reads AST. 7 cysteine pairs are disulfide-bonded: cysteine 249-cysteine 541, cysteine 374-cysteine 390, cysteine 430-cysteine 437, cysteine 523-cysteine 542, cysteine 527-cysteine 545, cysteine 548-cysteine 560, and cysteine 563-cysteine 576. Lysine 407 contributes to the L-glutamate binding site. N-linked (GlcNAc...) asparagine glycosylation is found at asparagine 458 and asparagine 486. Residue asparagine 572 is glycosylated (N-linked (GlcNAc...) asparagine). The chain crosses the membrane as a helical span at residues 591–615; sequence AVIPVFLAMLGIIATIFVMATFIRY. The Cytoplasmic portion of the chain corresponds to 616-627; sequence NDTPIVRASGRE. A helical transmembrane segment spans residues 628-648; the sequence is LSYVLLTGIFLCYIITFLMIA. Topologically, residues 649–654 are extracellular; sequence KPDVAV. A helical membrane pass occupies residues 655–675; it reads CSFRRVFLGLGMCISYAALLT. At 676-702 the chain is on the cytoplasmic side; the sequence is KTNRIYRIFEQGKKSVTAPRLISPTSQ. The helical transmembrane segment at 703–723 threads the bilayer; it reads LAITSSLISVQLLGVFIWFGV. Over 724–753 the chain is Extracellular; the sequence is DPPNIIIDYDEHKTMNPEQARGVLKCDITD. Residues 754–775 form a helical membrane-spanning segment; it reads LQIICSLGYSILLMVTCTVYAI. The Cytoplasmic segment spans residues 776–788; it reads KTRGVPENFNEAK. Residues 789-810 traverse the membrane as a helical segment; it reads PIGFTMYTTCIVWLAFIPIFFG. The Extracellular segment spans residues 811–825; the sequence is TAQSAEKLYIQTTTL. The helical transmembrane segment at 826-850 threads the bilayer; the sequence is TISMNLSASVALGMLYMPKVYIIIF. Topologically, residues 851–922 are cytoplasmic; the sequence is HPELNVQKRK…VTWYTIPPTV (72 aa).

Belongs to the G-protein coupled receptor 3 family. Homodimer. Interacts with PICK1.

The protein resides in the cell membrane. Functionally, G-protein coupled receptor activated by glutamate that regulates axon outgrowth through the MAPK-cAMP-PKA signaling pathway during neuronal development. Ligand binding causes a conformation change that triggers signaling via guanine nucleotide-binding proteins (G proteins) and modulates the activity of downstream effectors, such as adenylate cyclase that it inhibits. The protein is Metabotropic glutamate receptor 7 (GRM7) of Pongo abelii (Sumatran orangutan).